Here is a 64-residue protein sequence, read N- to C-terminus: Alternative prion protein (64 aa).

The interval 1-22 is disordered; it reads MEHWGEPIPGTGQSWRQPLSTS. A compositionally biased stretch (polar residues) spans 11–22; the sequence is TGQSWRQPLSTS. Residues 40–58 form a helical membrane-spanning segment; the sequence is WRWLGSAPWWWLGTATWWW.

It is found in the mitochondrion outer membrane. This Ovis aries (Sheep) protein is Alternative prion protein.